The primary structure comprises 27 residues: uncharacterized protein (27 aa).

Its subcellular location is the plastid. It localises to the chloroplast. This is an uncharacterized protein from Anthoceros angustus (Hornwort).